The sequence spans 817 residues: Kinesin-like protein 2 (817 aa).

The tract at residues 1–155 (MEEEGHKSLT…YNDEKSVNAS (155 aa)) is disordered. Positions 8–23 (SLTSHLPQSSSSLSQS) are enriched in low complexity. Residues 39–60 (IKTNSSSSNILKPRLSLQNEVN) show a composition bias toward polar residues. Residues 76–86 (SLASVKSSSLA) are compositionally biased toward low complexity. The segment covering 106-116 (PISSRSVSASS) has biased composition (polar residues). Low complexity predominate over residues 122 to 132 (ASAVSSSLNSS). Residues 155–242 (SALRTTEDRL…VSQKGMESLE (88 aa)) adopt a coiled-coil conformation. Residues N473, R475, R479, E543, G566, S567, G568, K569, T570, and T778 each coordinate ATP. In terms of domain architecture, Kinesin motor spans 473–807 (NIRVFCRVRP…LRFATKVNNT (335 aa)).

The protein belongs to the TRAFAC class myosin-kinesin ATPase superfamily. Kinesin family. NCD subfamily.

The protein resides in the cytoplasm. It localises to the cytoskeleton. Its subcellular location is the spindle. It is found in the nucleus. The catalysed reaction is ATP + H2O = ADP + phosphate + H(+). It carries out the reaction ATP + H2O + a kinesin associated with a microtubule at position (n) = ADP + phosphate + a kinesin associated with a microtubule at position (n-1, toward the minus end).. Its function is as follows. Minus end-directed microtubule (MT) motor that is involved in spindle microtubule shortening, kinetochore capture, and polarization of cytoplasmic microtubules. During mitosis, promotes spindle microtubule shortening by depolymerization. During metaphase, involved in the recapture of kinetochores displaced from the spindle and their transport towards the spindle pole body; promotes transport both by microtubule end-on pulling and by lateral sliding along the side of the microtubule. During interphase, required for the polarization of cytoplasmic microtubules where it orients the microtubule plus ends toward the cell ends and the minus ends toward the cell center. Required for karyogamy. This Schizosaccharomyces pombe (strain 972 / ATCC 24843) (Fission yeast) protein is Kinesin-like protein 2.